The chain runs to 62 residues: Insect toxin BsIT4 (62 aa).

The LCN-type CS-alpha/beta domain maps to 1–62 (DGYIKGNKGC…WLYAATNTCG (62 aa)). Cystine bridges form between C10-C61, C14-C35, C21-C42, and C25-C44.

This sequence belongs to the long (4 C-C) scorpion toxin superfamily. Sodium channel inhibitor family. Beta subfamily. As to expression, expressed by the venom gland.

Its subcellular location is the secreted. Functionally, depressant insect beta-toxins cause a transient contraction paralysis followed by a slow flaccid paralysis. They bind voltage-independently at site-4 of sodium channels (Nav) and shift the voltage of activation toward more negative potentials thereby affecting sodium channel activation and promoting spontaneous and repetitive firing. This toxin is active only on insects. The sequence is that of Insect toxin BsIT4 from Hottentotta tamulus sindicus (Scorpion).